We begin with the raw amino-acid sequence, 325 residues long: Small ribosomal subunit biogenesis GTPase RsgA (325 aa).

In terms of domain architecture, CP-type G spans 80 to 241; that stretch reads LSKQIHIIAS…IIDTPGIKGF (162 aa). GTP is bound by residues 129-132 and 183-191; these read NKID and GHSGVGKST. Zn(2+)-binding residues include cysteine 265, cysteine 270, histidine 272, and cysteine 278.

Belongs to the TRAFAC class YlqF/YawG GTPase family. RsgA subfamily. As to quaternary structure, monomer. Associates with 30S ribosomal subunit, binds 16S rRNA. Zn(2+) serves as cofactor.

The protein localises to the cytoplasm. One of several proteins that assist in the late maturation steps of the functional core of the 30S ribosomal subunit. Helps release RbfA from mature subunits. May play a role in the assembly of ribosomal proteins into the subunit. Circularly permuted GTPase that catalyzes slow GTP hydrolysis, GTPase activity is stimulated by the 30S ribosomal subunit. The polypeptide is Small ribosomal subunit biogenesis GTPase RsgA (Flavobacterium johnsoniae (strain ATCC 17061 / DSM 2064 / JCM 8514 / BCRC 14874 / CCUG 350202 / NBRC 14942 / NCIMB 11054 / UW101) (Cytophaga johnsonae)).